Here is a 426-residue protein sequence, read N- to C-terminus: Histidine--tRNA ligase (426 aa).

The protein belongs to the class-II aminoacyl-tRNA synthetase family. Homodimer.

The protein localises to the cytoplasm. The enzyme catalyses tRNA(His) + L-histidine + ATP = L-histidyl-tRNA(His) + AMP + diphosphate + H(+). This Pseudoalteromonas translucida (strain TAC 125) protein is Histidine--tRNA ligase.